The chain runs to 344 residues: Uroporphyrinogen decarboxylase (344 aa).

Residues 25–29 (RQAGR), aspartate 75, tyrosine 152, serine 207, and histidine 323 contribute to the substrate site.

The protein belongs to the uroporphyrinogen decarboxylase family. Homodimer.

Its subcellular location is the cytoplasm. It carries out the reaction uroporphyrinogen III + 4 H(+) = coproporphyrinogen III + 4 CO2. Its pathway is porphyrin-containing compound metabolism; protoporphyrin-IX biosynthesis; coproporphyrinogen-III from 5-aminolevulinate: step 4/4. Functionally, catalyzes the decarboxylation of four acetate groups of uroporphyrinogen-III to yield coproporphyrinogen-III. This Ruegeria pomeroyi (strain ATCC 700808 / DSM 15171 / DSS-3) (Silicibacter pomeroyi) protein is Uroporphyrinogen decarboxylase.